We begin with the raw amino-acid sequence, 392 residues long: Probable protein phosphatase 2C 29 (392 aa).

The PPM-type phosphatase domain maps to 44–353; it reads DYSVAVAQAN…DDITVVVLFL (310 aa). Asp-75, Gly-76, Asp-285, and Asp-344 together coordinate Mn(2+). Residues 360–392 are disordered; the sequence is AGRGDEIDGTDGPVDVFSLSPDDREDPTRPVLR.

The protein belongs to the PP2C family. It depends on Mg(2+) as a cofactor. Mn(2+) serves as cofactor.

The enzyme catalyses O-phospho-L-seryl-[protein] + H2O = L-seryl-[protein] + phosphate. It carries out the reaction O-phospho-L-threonyl-[protein] + H2O = L-threonyl-[protein] + phosphate. This Oryza sativa subsp. japonica (Rice) protein is Probable protein phosphatase 2C 29.